The sequence spans 884 residues: Valine--tRNA ligase (884 aa).

The short motif at 46–56 (PNVTGKLHLGH) is the 'HIGH' region element. The 'KMSKS' region motif lies at 520–524 (KMSKS). An ATP-binding site is contributed by Lys523. A coiled-coil region spans residues 809–844 (LADLLNVEEELARLEKELAKWQKELNMVGKKLSNER).

The protein belongs to the class-I aminoacyl-tRNA synthetase family. ValS type 1 subfamily. Monomer.

It is found in the cytoplasm. It carries out the reaction tRNA(Val) + L-valine + ATP = L-valyl-tRNA(Val) + AMP + diphosphate. Its function is as follows. Catalyzes the attachment of valine to tRNA(Val). As ValRS can inadvertently accommodate and process structurally similar amino acids such as threonine, to avoid such errors, it has a 'posttransfer' editing activity that hydrolyzes mischarged Thr-tRNA(Val) in a tRNA-dependent manner. The protein is Valine--tRNA ligase of Streptococcus agalactiae serotype Ia (strain ATCC 27591 / A909 / CDC SS700).